The chain runs to 102 residues: 10 kDa heat shock protein, mitochondrial (102 aa).

This sequence belongs to the GroES chaperonin family. In terms of assembly, homohexamer.

It is found in the mitochondrion matrix. Its function is as follows. Eukaryotic CPN10 homolog which is essential for mitochondrial protein biogenesis, together with CPN60. Binds to CPN60 in the presence of Mg-ATP and suppresses the ATPase activity of the latter. The polypeptide is 10 kDa heat shock protein, mitochondrial (Schistosoma japonicum (Blood fluke)).